The sequence spans 565 residues: MKSPAPSRPQKMALIPACIFLCFAALSVQAEETSVTPQPPDILLGPLFNDVQNAKLFPDQKTFADAVPNSDPLMILADYRMQQNQSGFDLRHFVNVNFTLPKEGEKYVPPEGQSLREHIDGLWPVLTRSTENTEKWDSLLPLPEPYVVPGGRFREVYYWDSYFTMLGLAESGHWDKVADMVANFAHEIDTYGHIPNGNRSYYLSRSQPPFFALMVELLAQHEGDAALKQYLPQMQKEYAYWMDGVENLQAGQQEKRVVKLQDGTLLNRYWDDRDTPRPESWVEDIATAKSNPNRPATEIYRDLRSAAASGWDFSSRWMDNPQQLNTLRTTSIVPVDLNSLMFKMEKILARASKAAGDNAMANQYETLANARQKGIEKYLWNDQQGWYADYDLKSHKVRNQLTAAALFPLYVNAAAKDRASKMATATKTHLLQPGGLNTTSVKSGQQWDAPNGWAPLQWVATEGLQNYGQNEVAMDISWHFLTNVQHTYDREKKLVEKYDVSTTGTGGGGGEYPLQDGFGWTNGVTLKMLDLICPKEQPCDNVPATRPLSESTTQPVKQKEAEPTP.

A signal peptide spans 1-30 (MKSPAPSRPQKMALIPACIFLCFAALSVQA). Residues arginine 152, 159-160 (WD), asparagine 196, 205-207 (RSQ), 277-279 (RPE), and glycine 310 contribute to the substrate site. Residues aspartate 312 and glutamate 496 each act as proton donor/acceptor in the active site. Glutamate 511 contributes to the substrate binding site. Positions 539–565 (CDNVPATRPLSESTTQPVKQKEAEPTP) are disordered.

It belongs to the glycosyl hydrolase 37 family. Monomer.

The protein resides in the periplasm. It catalyses the reaction alpha,alpha-trehalose + H2O = alpha-D-glucose + beta-D-glucose. In terms of biological role, provides the cells with the ability to utilize trehalose at high osmolarity by splitting it into glucose molecules that can subsequently be taken up by the phosphotransferase-mediated uptake system. In Escherichia coli O17:K52:H18 (strain UMN026 / ExPEC), this protein is Periplasmic trehalase.